Here is a 336-residue protein sequence, read N- to C-terminus: Prenytransferase ascA (336 aa).

Residues 1 to 26 (MAAKSRSPKRGTSEKTPLVEKEAPYQ) are disordered. A compositionally biased stretch (basic and acidic residues) spans 11-23 (GTSEKTPLVEKEA). The next 8 helical transmembrane spans lie at 52–72 (PHGNYMIYFPHIIGLMYASAI), 74–94 (PTELSVLGHRAAIFAIWTFLM), 131–151 (GHVFTLILTLLGFAAIQSLPI), 179–199 (VILGSTLASTIALSAYSVGLP), 206–226 (FVPTLCLSATIMLLVVFYDVV), 251–271 (LEGLFAFITLSIAGSLTTLGY), 272–292 (LVGMGHWFYLFSVGGLTFGLV), and 314–334 (FAILNLLTGFIMEYATKDYVV).

It belongs to the UbiA prenyltransferase family. Mg(2+) is required as a cofactor.

The protein localises to the membrane. The enzyme catalyses orsellinate + (2E,6E)-farnesyl diphosphate = ilicicolinate B + diphosphate. The protein operates within secondary metabolite biosynthesis; terpenoid biosynthesis. Functionally, prenytransferase; part of the asc-1 gene cluster that mediates the biosynthesis of both ascochlorin and ascofuranone, a strong inhibitor of cyanide-insensitive alternative oxidases and a promising drug candidate against African trypanosomiasis. The first step in the pathway is performed by the non-reducing polyketide synthase ascC that produces orsellinic acid by condensing acetyl-CoA with 3 malonyl-CoA units. Orsellinic acid is then prenylated by the prenyltransferase ascA to yield ilicicolinic acid B. Ilicicolinic acid B is further reduced to ilicicolin B by the reductase ascB. The halogenase ascD then chlorinates ilicicolin B to produce ilicicolin A which is converted to ilicicolin A epoxide by the cytochrome P450 monooxygenase ascE that catalyzes stereoselective epoxidation of the terminal double bond of the prenyl group. Ilicicolin A epoxide is the last common precursor for the biosynthesis of ascofuranone and ascochlorin. The terpene cyclase ascF produces a monocyclic terpene, and the cyclization reaction is proposed to be initiated by protonation of the terminal epoxide of ilicicolin A epoxide to generate a monocyclic tertiarycation, which is followed by a series of hydride and methyl shifts with abstraction of proton, leading to the formation of the (14S,15R,19R)-trimethylcyclohexanone ring structure of ilicicolin C, which is finally reduced to ascochlorin by the dehydrogenase ascG. On the other hand, ilicicolin A epoxide is hydroxylated by the cytochrome P450 monooxygenase ascH, and the resultant product is cyclized by the terpene cyclase ascI to ascofuranol via protonation-initiated epoxide ring opening, which facilitates the 6-endo-tet cyclization to form the tetrahy-drofuran ring. Finally, ascofuranol is oxidized into ascofuranone by ascJ. This chain is Prenytransferase ascA, found in Acremonium egyptiacum (Oospora egyptiaca).